Here is a 213-residue protein sequence, read N- to C-terminus: Glycerol-3-phosphate acyltransferase (213 aa).

6 helical membrane passes run 3–23, 54–76, 83–100, 110–130, 142–162, and 163–183; these read ILLL…LWIG, TITF…WLGI, IIGF…FTGF, AGVL…VFAL, SITA…IHFL, and LDGY…VIIF.

The protein belongs to the PlsY family. In terms of assembly, probably interacts with PlsX.

The protein resides in the cell membrane. The enzyme catalyses an acyl phosphate + sn-glycerol 3-phosphate = a 1-acyl-sn-glycero-3-phosphate + phosphate. It participates in lipid metabolism; phospholipid metabolism. In terms of biological role, catalyzes the transfer of an acyl group from acyl-phosphate (acyl-PO(4)) to glycerol-3-phosphate (G3P) to form lysophosphatidic acid (LPA). This enzyme utilizes acyl-phosphate as fatty acyl donor, but not acyl-CoA or acyl-ACP. The sequence is that of Glycerol-3-phosphate acyltransferase from Streptococcus thermophilus (strain ATCC BAA-491 / LMD-9).